A 205-amino-acid chain; its full sequence is uncharacterized protein (205 aa).

Residues Ser-119 and His-160 each act as charge relay system in the active site.

The protein belongs to the peptidase S51 family.

This is an uncharacterized protein from Listeria monocytogenes serovar 1/2a (strain ATCC BAA-679 / EGD-e).